The primary structure comprises 603 residues: Carbon catabolite repressor protein 4 homolog 2 (603 aa).

Positions 115-136 (ENNANEDDDLNRNNSAGSGSLA) are disordered. Low complexity predominate over residues 126–136 (RNNSAGSGSLA). Glu302 contributes to the Mg(2+) binding site.

This sequence belongs to the CCR4/nocturin family. Component of the CCR4-NOT complex, at least composed of CRR4 and CAF1 proteins. It depends on Mg(2+) as a cofactor.

The protein resides in the nucleus. It is found in the cytoplasm. The enzyme catalyses Exonucleolytic cleavage of poly(A) to 5'-AMP.. Its function is as follows. Acts as a catalytic component of the CCR4-NOT core complex, which in the nucleus seems to be a general transcription factor, and in the cytoplasm the major mRNA deadenylase involved in mRNA turnover. This is Carbon catabolite repressor protein 4 homolog 2 (CCR4-2) from Arabidopsis thaliana (Mouse-ear cress).